The primary structure comprises 303 residues: N-acetyl-D-glucosamine kinase (303 aa).

ATP is bound by residues 4–11 (GFDIGGTK) and 133–140 (GVGGGLVL). Zn(2+) is bound by residues H157, C177, C179, and C184.

Belongs to the ROK (NagC/XylR) family. NagK subfamily.

It catalyses the reaction N-acetyl-D-glucosamine + ATP = N-acetyl-D-glucosamine 6-phosphate + ADP + H(+). It functions in the pathway cell wall biogenesis; peptidoglycan recycling. In terms of biological role, catalyzes the phosphorylation of N-acetyl-D-glucosamine (GlcNAc) derived from cell-wall degradation, yielding GlcNAc-6-P. In Salmonella agona (strain SL483), this protein is N-acetyl-D-glucosamine kinase.